Reading from the N-terminus, the 244-residue chain is MIQAEPFEARLVAVRPLSPFVRELSFERADGKAFLFEAGQWVNLVLPLPGGEVKRAYSIASAPDGSPRFDLAVTRVEGGAGSEYLHRLEPGATLRAVGPHGLFTRDPGSPAPSLFVATGTGVTPLRSMLRASLRAGAAAHLWILFGARFEEDIIYRDELEALARGSDRIRYEITLSRGGPSWSGRRGYVQAHVPELYRELAGASGDPAPHVFICGLDRMVSLVRELARGELGVPRKHVHVERYD.

The FAD-binding FR-type domain occupies 4–106 (AEPFEARLVA…VGPHGLFTRD (103 aa)). FAD is bound by residues 55 to 58 (RAYS) and threonine 120.

This sequence belongs to the ferredoxin--NADP reductase type 1 family. The cofactor is FAD.

It catalyses the reaction 2 reduced [4Fe-4S]-[ferredoxin] + NADP(+) + H(+) = 2 oxidized [4Fe-4S]-[ferredoxin] + NADPH. Transports electrons between NADPH and ferredoxin. Can transfer electrons to ferredoxins Fdx2 and Fdx8. Prefers NADPH to NADH. This is Ferredoxin--NADP reductase B from Sorangium cellulosum (strain So ce56) (Polyangium cellulosum (strain So ce56)).